An 85-amino-acid polypeptide reads, in one-letter code: Small ribosomal subunit protein uS17 (85 aa).

Belongs to the universal ribosomal protein uS17 family. As to quaternary structure, part of the 30S ribosomal subunit.

In terms of biological role, one of the primary rRNA binding proteins, it binds specifically to the 5'-end of 16S ribosomal RNA. This Trichlorobacter lovleyi (strain ATCC BAA-1151 / DSM 17278 / SZ) (Geobacter lovleyi) protein is Small ribosomal subunit protein uS17.